The chain runs to 831 residues: Translation initiation factor IF-2 (831 aa).

The 171-residue stretch at 329-499 (TRAPVVTVMG…LLISEMQDLK (171 aa)) folds into the tr-type G domain. Residues 338–345 (GHVDHGKT) form a G1 region. GTP is bound at residue 338–345 (GHVDHGKT). The tract at residues 363–367 (GITQH) is G2. Residues 385-388 (DTPG) are G3. Residues 385–389 (DTPGH) and 439–442 (NKID) contribute to the GTP site. Positions 439-442 (NKID) are G4. The tract at residues 475-477 (SAL) is G5.

This sequence belongs to the TRAFAC class translation factor GTPase superfamily. Classic translation factor GTPase family. IF-2 subfamily.

It localises to the cytoplasm. In terms of biological role, one of the essential components for the initiation of protein synthesis. Protects formylmethionyl-tRNA from spontaneous hydrolysis and promotes its binding to the 30S ribosomal subunits. Also involved in the hydrolysis of GTP during the formation of the 70S ribosomal complex. The sequence is that of Translation initiation factor IF-2 from Rickettsia typhi (strain ATCC VR-144 / Wilmington).